The sequence spans 476 residues: MTVRVRLAPSPTGTLHIGTARTAVFNWLFARHQNGKFLLRIEDTDKERSKPEFTENILDGLRWLGLDWDEEPVIQSERIEVHRQAISQLLAQGLAYRCYVSEQELDAMREAQRASGQPPRYDNRHRHLTGDQEEAYRAEGREAVIRFRIDDEATIAWTDMVRGPMQWRGADLGGDMVIARRAPATTVGDPLYNLVVVVDDAAMAISHVIRGEDHIANTAKQLLLYQALELNCPTFAHTPLILNPEGRKLSKRDGVTSIGDFQEMGYTAEALANYMTLLGWSVPEGTEERFTLRQAAEVFSFDRVNKAGAKFDWDKLNWLNAQVLHGWSPAELLAALEPRWQKQGWVVSDPLWANDLAVLLGPSLTLIEDGVTQARPFFEEPPLEEDGLKQLEQEGARPALQALLSALELNAWDGLDVERAQTLLKEAAASAEVKKGVLMKSLRAALLGRLQGPDLITTWALLARLGHDRQRLRRCL.

The short motif at 9–19 (PSPTGTLHIGT) is the 'HIGH' region element. A 'KMSKS' region motif is present at residues 248–252 (KLSKR). Lysine 251 contacts ATP.

Belongs to the class-I aminoacyl-tRNA synthetase family. Glutamate--tRNA ligase type 1 subfamily. As to quaternary structure, monomer.

Its subcellular location is the cytoplasm. The catalysed reaction is tRNA(Glu) + L-glutamate + ATP = L-glutamyl-tRNA(Glu) + AMP + diphosphate. Catalyzes the attachment of glutamate to tRNA(Glu) in a two-step reaction: glutamate is first activated by ATP to form Glu-AMP and then transferred to the acceptor end of tRNA(Glu). The protein is Glutamate--tRNA ligase of Synechococcus sp. (strain CC9311).